A 160-amino-acid polypeptide reads, in one-letter code: Sec-independent protein translocase protein TatB (160 aa).

Residues 1–21 (MFGMGFFEILVVLVVAIIFLG) form a helical membrane-spanning segment. Residues 118–160 (HLNEEVSNEEALNKEVSSDESPKEVQLATDNNTKEHDKEKEHV) are disordered. Basic and acidic residues-rich tracts occupy residues 128–140 (ALNK…ESPK) and 149–160 (NTKEHDKEKEHV).

Belongs to the TatB family. As to quaternary structure, the Tat system comprises two distinct complexes: a TatABC complex, containing multiple copies of TatA, TatB and TatC subunits, and a separate TatA complex, containing only TatA subunits. Substrates initially bind to the TatABC complex, which probably triggers association of the separate TatA complex to form the active translocon.

It localises to the cell inner membrane. Functionally, part of the twin-arginine translocation (Tat) system that transports large folded proteins containing a characteristic twin-arginine motif in their signal peptide across membranes. Together with TatC, TatB is part of a receptor directly interacting with Tat signal peptides. TatB may form an oligomeric binding site that transiently accommodates folded Tat precursor proteins before their translocation. In Helicobacter pylori (strain HPAG1), this protein is Sec-independent protein translocase protein TatB.